Reading from the N-terminus, the 768-residue chain is ATP-dependent zinc metalloprotease FtsH (768 aa).

Residues 1–33 (MADRDKNDIRKRLEELRKDNNRRNNRQDNGNRS) are Cytoplasmic-facing. A helical membrane pass occupies residues 34 to 54 (PFSGFLFFIFVILLFTFTLLF). At 55 to 139 (HRDIQTYFQE…KLNSLQPSGG (85 aa)) the chain is on the periplasmic side. The helical transmembrane segment at 140–160 (GFFLLLLGQFLPMIIMIGLMV) threads the bilayer. Topologically, residues 161–768 (YLAKKMVGGS…SNFKLPSFME (608 aa)) are cytoplasmic. Residue 238–245 (GRPGTGKT) participates in ATP binding. His461 is a binding site for Zn(2+). Glu462 is a catalytic residue. Residues His465 and Asp536 each coordinate Zn(2+). The disordered stretch occupies residues 647-768 (EESIQKGSEG…SNFKLPSFME (122 aa)). A compositionally biased stretch (basic and acidic residues) spans 669 to 698 (QENKTVEAEVHDSNLKSDTEKLAEAVREIT). A compositionally biased stretch (acidic residues) spans 715-731 (KDSDDNEKNDDDNENSD).

In the central section; belongs to the AAA ATPase family. This sequence in the C-terminal section; belongs to the peptidase M41 family. In terms of assembly, homohexamer. It depends on Zn(2+) as a cofactor.

Its subcellular location is the cell inner membrane. Functionally, acts as a processive, ATP-dependent zinc metallopeptidase for both cytoplasmic and membrane proteins. Plays a role in the quality control of integral membrane proteins. The sequence is that of ATP-dependent zinc metalloprotease FtsH from Leptotrichia buccalis (strain ATCC 14201 / DSM 1135 / JCM 12969 / NCTC 10249 / C-1013-b).